We begin with the raw amino-acid sequence, 177 residues long: Peptidyl-tRNA hydrolase (177 aa).

Tyr-12 lines the tRNA pocket. His-17 (proton acceptor) is an active-site residue. TRNA contacts are provided by Phe-63, Asn-65, and Asn-111.

The protein belongs to the PTH family. As to quaternary structure, monomer.

The protein resides in the cytoplasm. It catalyses the reaction an N-acyl-L-alpha-aminoacyl-tRNA + H2O = an N-acyl-L-amino acid + a tRNA + H(+). Hydrolyzes ribosome-free peptidyl-tRNAs (with 1 or more amino acids incorporated), which drop off the ribosome during protein synthesis, or as a result of ribosome stalling. In terms of biological role, catalyzes the release of premature peptidyl moieties from peptidyl-tRNA molecules trapped in stalled 50S ribosomal subunits, and thus maintains levels of free tRNAs and 50S ribosomes. This chain is Peptidyl-tRNA hydrolase, found in Buchnera aphidicola subsp. Acyrthosiphon pisum (strain 5A).